The sequence spans 221 residues: PKHD-type hydroxylase Pro_1271 (221 aa).

The Fe2OG dioxygenase domain maps to 80–174 (KVHGVMFSKS…RIVCVGWIQS (95 aa)). Residues H98, D100, and H155 each coordinate Fe cation. 2-oxoglutarate is bound at residue R165.

It depends on Fe(2+) as a cofactor. L-ascorbate is required as a cofactor.

This Prochlorococcus marinus (strain SARG / CCMP1375 / SS120) protein is PKHD-type hydroxylase Pro_1271.